Consider the following 163-residue polypeptide: UPF0260 protein GOX1406 (163 aa).

Belongs to the UPF0260 family.

The polypeptide is UPF0260 protein GOX1406 (Gluconobacter oxydans (strain 621H) (Gluconobacter suboxydans)).